A 514-amino-acid polypeptide reads, in one-letter code: Polygalacturonase (514 aa).

The signal sequence occupies residues 1–22; that stretch reads MGMKFMAAVAFLALQLIVMAAA. Residues 23-50 constitute a propeptide that is removed on maturation; sequence EDQSAQIMLDSDIEQYLRSNRSLKKLVH. 6 PbH1 repeats span residues 214 to 240, 241 to 262, 264 to 284, 294 to 315, 323 to 344, and 357 to 384; these read CEGVKIQGLKIKAPRDSPNTDGIDIFA, SKRFHIEKCVIGTGDDCIAIGT, SSNITIKDLICGPGHGISIGS, VSHVHVNRAKFIDTQNGLRIKT, ASYITYENVEMINSENPILINQ, and RSAVQIQGVTYKNIHGTSATAAAIQLMC. The Proton donor role is filled by Asp255. N-linked (GlcNAc...) asparagine glycosylation occurs at Asn266. Residue His278 is part of the active site. Asn397 carries N-linked (GlcNAc...) asparagine glycosylation.

This sequence belongs to the glycosyl hydrolase 28 family.

Its subcellular location is the secreted. It is found in the cell wall. The catalysed reaction is (1,4-alpha-D-galacturonosyl)n+m + H2O = (1,4-alpha-D-galacturonosyl)n + (1,4-alpha-D-galacturonosyl)m.. This chain is Polygalacturonase, found in Chamaecyparis obtusa (Hinoki false-cypress).